We begin with the raw amino-acid sequence, 159 residues long: Endoribonuclease YbeY (159 aa).

Residues H114, H118, and H124 each contribute to the Zn(2+) site.

Belongs to the endoribonuclease YbeY family. Requires Zn(2+) as cofactor.

Its subcellular location is the cytoplasm. Single strand-specific metallo-endoribonuclease involved in late-stage 70S ribosome quality control and in maturation of the 3' terminus of the 16S rRNA. In Pectobacterium carotovorum subsp. carotovorum (strain PC1), this protein is Endoribonuclease YbeY.